We begin with the raw amino-acid sequence, 395 residues long: Bifunctional fatty acid conjugase/Delta(12)-oleate desaturase (395 aa).

2 helical membrane passes run 73–93 (FALA…LPKP) and 97–117 (MAWP…WVIA). Residues 118–122 (HECGH) carry the Histidine box-1 motif. The helical transmembrane segment at 130-150 (WVNDAVGFFLHTSLLVPYFPF) threads the bilayer. A Histidine box-2 motif is present at residues 154 to 158 (HRRHH). 3 helical membrane-spanning segments follow: residues 192–212 (VLTL…FNAS), 236–256 (FWVH…YRLA), and 264–284 (LLSI…LITF). The Histidine box-3 signature appears at 328–332 (HVIHH).

It belongs to the fatty acid desaturase type 1 family.

Its subcellular location is the membrane. It catalyses the reaction a (9Z,12Z)-octadecadienoyl-containing glycerolipid + 2 Fe(II)-[cytochrome b5] + O2 + 2 H(+) = a (9Z,11E,13Z)-octadeca-9,11,13-trienoyl-containing glycerolipid + 2 Fe(III)-[cytochrome b5] + 2 H2O. It functions in the pathway lipid metabolism; polyunsaturated fatty acid biosynthesis. Its function is as follows. Converts a single cis double bond at position 12 of linoleate incorporated into phosphatidylcholine into conjugated 11-trans and 13-cis double bonds. Produces punicic acid (18:3(9Z,11E,13Z)) from linoleic acid and conjugated octadecatetraenoic fatty acid from gamma-linolenic acid. No activity with cis- and trans-vaccenic acid, alpha-linolenic acid or homo-gamma-linolenic acid. 16:2(9Z,12Z), 18:3(9Z,12Z,15Z) and 18:2(9Z,12Z) are substrates for the conjugase to form trans-Delta(11) and cis-Delta(13) double bonds. No activity on the cis-Delta(9) double bonds of oleic and palmitoleic acids. The chain is Bifunctional fatty acid conjugase/Delta(12)-oleate desaturase from Punica granatum (Pomegranate).